The following is a 268-amino-acid chain: Small ribosomal subunit protein eS1 (268 aa).

2 disordered regions span residues 1 to 21 and 238 to 268; these read MAVG…KKKV and GGGK…QEAV.

This sequence belongs to the eukaryotic ribosomal protein eS1 family. In terms of assembly, component of the small ribosomal subunit. Mature ribosomes consist of a small (40S) and a large (60S) subunit. The 40S subunit contains about 33 different proteins and 1 molecule of RNA (18S). The 60S subunit contains about 49 different proteins and 3 molecules of RNA (28S, 5.8S and 5S).

Its subcellular location is the cytoplasm. Essential for oogenesis; required for late follicle cell development. The protein is Small ribosomal subunit protein eS1 of Drosophila ananassae (Fruit fly).